Consider the following 172-residue polypeptide: uncharacterized protein (172 aa).

This sequence belongs to the baculoviridae 19 kDa protein family.

This is an uncharacterized protein from Orgyia pseudotsugata multicapsid polyhedrosis virus (OpMNPV).